Consider the following 219-residue polypeptide: LLDTDFSIEATAATTTAGSGSKVAEASTSDYRVAVFGAGGVGKSSITQRFVKGTFNENYVPTIEDTYRQVISCNQKNVCTLQITDTTGSHQFPAMQRLSISKGNAFILIYSVTNKQSFAELVPIIEMMKEVKGNAIAETPIMLVGNKKDEESKREVSSNSGQKVATNMECGFIETSAKNNENITELFQQLLALEKKRQLALTMDDPDGKNGKKKGCHIM.

GTP-binding positions include 37–44 (GAGGVGKS), 56–62 (NENYVPT), 85–89 (DTTGS), 146–149 (NKKD), and 177–178 (AK). The Effector region signature appears at 59-67 (YVPTIEDTY). Cysteine methyl ester is present on Cys-216. Residue Cys-216 is the site of S-geranylgeranyl cysteine attachment. The propeptide at 217-219 (HIM) is removed in mature form.

This sequence belongs to the small GTPase superfamily. Di-Ras family. As to quaternary structure, interacts with epac-1 (via C-terminus). As to expression, expressed specifically in neurons including the nerve ring, ventral and dorsal nerve cord motor neurons and tail ganglia.

The protein localises to the cell membrane. Its function is as follows. Displays low GTPase activity and exists predominantly in the GTP-bound form. Together with epac-1, may regulate acetylcholine release at the neuromuscular junctions probably downstream of G-protein gsa-1 and adenylate cyclase acy-1. The protein is GTP-binding protein drn-1 of Caenorhabditis elegans.